The chain runs to 245 residues: 5-oxoprolinase subunit A (245 aa).

This sequence belongs to the LamB/PxpA family. Forms a complex composed of PxpA, PxpB and PxpC.

It catalyses the reaction 5-oxo-L-proline + ATP + 2 H2O = L-glutamate + ADP + phosphate + H(+). Catalyzes the cleavage of 5-oxoproline to form L-glutamate coupled to the hydrolysis of ATP to ADP and inorganic phosphate. In Chromobacterium violaceum (strain ATCC 12472 / DSM 30191 / JCM 1249 / CCUG 213 / NBRC 12614 / NCIMB 9131 / NCTC 9757 / MK), this protein is 5-oxoprolinase subunit A.